The chain runs to 164 residues: C-phycoerythrin alpha chain (164 aa).

C82 and C139 together coordinate (2R,3E)-phycoerythrobilin.

The protein belongs to the phycobiliprotein family. In terms of assembly, heterodimer of an alpha and a beta chain. In terms of processing, contains two covalently linked bilin chromophores.

Its subcellular location is the cellular thylakoid membrane. Functionally, light-harvesting photosynthetic bile pigment-protein from the phycobiliprotein complex. In Pseudanabaena tenuis (strain PCC 7409), this protein is C-phycoerythrin alpha chain (cpeA).